The primary structure comprises 223 residues: UPF0441 protein KPN78578_33850 (223 aa).

The segment at 165–223 is disordered; sequence SYGAAQPGRTMNVPKTAMAPKPATTTTVTRGGFGESVAKQSTMQRSAAGSTSSSRSMGG. 2 stretches are compositionally biased toward low complexity: residues 177-193 and 209-223; these read VPKT…TTVT and RSAA…SMGG.

It belongs to the UPF0441 family.

The chain is UPF0441 protein KPN78578_33850 from Klebsiella pneumoniae subsp. pneumoniae (strain ATCC 700721 / MGH 78578).